We begin with the raw amino-acid sequence, 527 residues long: Berberine bridge enzyme-like 8 (527 aa).

The signal sequence occupies residues 1–20 (MKYALILVLFFVVFIWQSSS). Cysteines 31 and 93 form a disulfide. N-linked (GlcNAc...) asparagine glycans are attached at residues N51 and N68. Residues 71-247 (STPKPFLIIA…LAYKINLVEV (177 aa)) form the FAD-binding PCMH-type domain. A cross-link (6-(S-cysteinyl)-8alpha-(pros-histidyl)-FAD (His-Cys)) is located at residues 108–172 (HDYDGLSYVT…KTLAYPAGIC (65 aa)). N-linked (GlcNAc...) asparagine glycans are attached at residues N250, N263, and N292.

Belongs to the oxygen-dependent FAD-linked oxidoreductase family. FAD serves as cofactor. Post-translationally, the FAD cofactor is bound via a bicovalent 6-S-cysteinyl, 8alpha-N1-histidyl FAD linkage.

It localises to the secreted. Its subcellular location is the cell wall. This chain is Berberine bridge enzyme-like 8, found in Arabidopsis thaliana (Mouse-ear cress).